The primary structure comprises 591 residues: MSIETLLEAARFLEWQAQQQQRAREEQERLRLEREREREQEQKRASNLARLAHALPVEEPRIEAPPLPLSPPAPPPAPPPPLATPAPLTVIPIPVVTNSPQSLPPPPPLPPAAQPLPLAPRQPALVSTPGLSIKEPVTLPTRPQVPTPAPLLPDAKTTVAPTGSPKPLQPLPAPILTIAPHPGVQPQLAPQQPPPPTLGTLKLAPAEEAKSSEQKKRPGGIGTREVHNKLEKNRRAHLKECFETLKRNIPNVDDKKTSNLSVLRTALRYIQSLKRKEKEYEHEMERLAREKIATQQRLAELKHELSQWMDVLEIDRVLRQTGQPEDDQASTSTASEGEDNVDEEMEGDRAGLGPPKLNHRPQPELLKSALPTPSTAPAPLPTHPHPHPHPVALSPAHLPVQQQQPPQQKTPLPAPPPPPATPTQTLVPAPAHLVATAGGGSTVIAHTATTHASVIQTVNHVLQGPGGKHIAHIAPSAPSPAVQLAPATPPIGHITVHPATLNHVAHLGSQLPLYPQPVAVSQPVAVSHIAHTLSHQQVNGTAGLGPPATVMAKPAVGAQVVHHPQLVGQTVLNPVTMVTMPSFPVSTLKLA.

S2 is subject to N-acetylserine. Disordered stretches follow at residues 17–122 and 182–223; these read AQQQ…APRQ and PGVQ…GIGT. Basic and acidic residues predominate over residues 22–44; sequence RAREEQERLRLEREREREQEQKR. Pro residues-rich tracts occupy residues 63-84 and 102-120; these read EAPP…PLAT and SLPP…PLAP. Residues 205-216 show a composition bias toward basic and acidic residues; that stretch reads PAEEAKSSEQKK. A bHLH domain is found at 222 to 273; the sequence is GTREVHNKLEKNRRAHLKECFETLKRNIPNVDDKKTSNLSVLRTALRYIQSL. The interval 273-301 is leucine-zipper; it reads LKRKEKEYEHEMERLAREKIATQQRLAEL. The segment at 321 to 426 is disordered; sequence TGQPEDDQAS…PPPATPTQTL (106 aa). Residues 336-346 show a composition bias toward acidic residues; it reads EGEDNVDEEME. Pro residues predominate over residues 374 to 383; the sequence is STAPAPLPTH. A compositionally biased stretch (low complexity) spans 390–411; that stretch reads PVALSPAHLPVQQQQPPQQKTP. Over residues 412 to 421 the composition is skewed to pro residues; it reads LPAPPPPPAT.

As to quaternary structure, efficient DNA binding requires dimerization with another bHLH protein. Binds DNA as a homodimer or a heterodimer with MAX.

It is found in the nucleus. Its function is as follows. Binds DNA as a heterodimer with MAX and represses transcription. Binds to the canonical E box sequence 5'-CACGTG-3' and, with higher affinity, to 5'-CACGCG-3'. The polypeptide is Max-binding protein MNT (Mnt) (Mus musculus (Mouse)).